Reading from the N-terminus, the 451-residue chain is Histidinol dehydrogenase (451 aa).

Residues 1–20 (MLNVTDLRGHTPSKSDIRRA) are disordered. Residues 7–19 (LRGHTPSKSDIRR) are compositionally biased toward basic and acidic residues. Residues tyrosine 129, glutamine 193, and asparagine 218 each coordinate NAD(+). Substrate contacts are provided by threonine 241, glutamine 263, and histidine 266. Glutamine 263 and histidine 266 together coordinate Zn(2+). Catalysis depends on proton acceptor residues glutamate 332 and histidine 333. 4 residues coordinate substrate: histidine 333, aspartate 366, glutamate 420, and histidine 425. Aspartate 366 contributes to the Zn(2+) binding site. Histidine 425 contacts Zn(2+).

It belongs to the histidinol dehydrogenase family. It depends on Zn(2+) as a cofactor.

The enzyme catalyses L-histidinol + 2 NAD(+) + H2O = L-histidine + 2 NADH + 3 H(+). The protein operates within amino-acid biosynthesis; L-histidine biosynthesis; L-histidine from 5-phospho-alpha-D-ribose 1-diphosphate: step 9/9. Functionally, catalyzes the sequential NAD-dependent oxidations of L-histidinol to L-histidinaldehyde and then to L-histidine. The protein is Histidinol dehydrogenase of Corynebacterium efficiens (strain DSM 44549 / YS-314 / AJ 12310 / JCM 11189 / NBRC 100395).